Here is a 216-residue protein sequence, read N- to C-terminus: Small ribosomal subunit protein uS3c (216 aa).

The KH type-2 domain occupies 43–118; it reads INNYVKKNMR…KLNITITRIE (76 aa).

This sequence belongs to the universal ribosomal protein uS3 family. As to quaternary structure, part of the 30S ribosomal subunit.

The protein resides in the plastid. The sequence is that of Small ribosomal subunit protein uS3c (rps3) from Cuscuta reflexa (Southern Asian dodder).